Reading from the N-terminus, the 213-residue chain is MQILLAALVAYLIGSVSFAVVVSSVMGLADPRSYGSKNPGATNVLRSGNKKAAILTLVGDAFKGWIAVWLARHFGLPDVAVAWVAIAVFLGHLYPVFFRFQGGKGVATAAGVLLAVHPVLGLATALTWLIVAFFFRYSSLAALVAAVFAPVFDVFLFGTPGHNPVAWAVLAMSVLLVWRHRGNISKLLAGQESRIGDKKKAAADGGAQDGGKA.

The next 5 helical transmembrane spans lie at 3–23, 51–71, 78–98, 115–135, and 140–160; these read ILLA…VVVS, KAAI…VWLA, DVAV…PVFF, AVHP…AFFF, and LAAL…FGTP.

Belongs to the PlsY family. Probably interacts with PlsX.

It is found in the cell inner membrane. The catalysed reaction is an acyl phosphate + sn-glycerol 3-phosphate = a 1-acyl-sn-glycero-3-phosphate + phosphate. Its pathway is lipid metabolism; phospholipid metabolism. In terms of biological role, catalyzes the transfer of an acyl group from acyl-phosphate (acyl-PO(4)) to glycerol-3-phosphate (G3P) to form lysophosphatidic acid (LPA). This enzyme utilizes acyl-phosphate as fatty acyl donor, but not acyl-CoA or acyl-ACP. In Burkholderia cenocepacia (strain ATCC BAA-245 / DSM 16553 / LMG 16656 / NCTC 13227 / J2315 / CF5610) (Burkholderia cepacia (strain J2315)), this protein is Glycerol-3-phosphate acyltransferase.